A 354-amino-acid chain; its full sequence is Phospho-N-acetylmuramoyl-pentapeptide-transferase (354 aa).

10 helical membrane-spanning segments follow: residues Phe-23–Ala-43, Thr-66–Ala-86, Leu-88–Phe-108, Leu-130–Leu-150, Phe-161–Ala-181, Gly-193–Cys-213, Val-230–Phe-250, Val-257–Met-277, Ile-282–Val-302, and Lys-331–Leu-351.

It belongs to the glycosyltransferase 4 family. MraY subfamily. It depends on Mg(2+) as a cofactor.

The protein localises to the cell inner membrane. The catalysed reaction is UDP-N-acetyl-alpha-D-muramoyl-L-alanyl-gamma-D-glutamyl-meso-2,6-diaminopimeloyl-D-alanyl-D-alanine + di-trans,octa-cis-undecaprenyl phosphate = di-trans,octa-cis-undecaprenyl diphospho-N-acetyl-alpha-D-muramoyl-L-alanyl-D-glutamyl-meso-2,6-diaminopimeloyl-D-alanyl-D-alanine + UMP. Its pathway is cell wall biogenesis; peptidoglycan biosynthesis. Functionally, catalyzes the initial step of the lipid cycle reactions in the biosynthesis of the cell wall peptidoglycan: transfers peptidoglycan precursor phospho-MurNAc-pentapeptide from UDP-MurNAc-pentapeptide onto the lipid carrier undecaprenyl phosphate, yielding undecaprenyl-pyrophosphoryl-MurNAc-pentapeptide, known as lipid I. In Campylobacter curvus (strain 525.92), this protein is Phospho-N-acetylmuramoyl-pentapeptide-transferase.